Consider the following 399-residue polypeptide: Rho GTPase-activating protein gacC (399 aa).

The span at Met-1–Ser-13 shows a compositional bias: basic and acidic residues. The interval Met-1–Lys-80 is disordered. Positions Asp-14 to Ser-31 are enriched in polar residues. The segment covering Ser-61 to Val-79 has biased composition (low complexity). The Rho-GAP domain maps to Val-186 to Phe-375.

Its subcellular location is the cytoplasm. In terms of biological role, rho GTPase-activating protein involved in the signal transduction pathway. In Dictyostelium discoideum (Social amoeba), this protein is Rho GTPase-activating protein gacC (gacC).